The sequence spans 420 residues: Exodeoxyribonuclease 7 large subunit (420 aa).

The protein belongs to the XseA family. In terms of assembly, heterooligomer composed of large and small subunits.

It localises to the cytoplasm. The enzyme catalyses Exonucleolytic cleavage in either 5'- to 3'- or 3'- to 5'-direction to yield nucleoside 5'-phosphates.. Its function is as follows. Bidirectionally degrades single-stranded DNA into large acid-insoluble oligonucleotides, which are then degraded further into small acid-soluble oligonucleotides. The protein is Exodeoxyribonuclease 7 large subunit of Helicobacter pylori (strain J99 / ATCC 700824) (Campylobacter pylori J99).